Reading from the N-terminus, the 531-residue chain is Flavin-containing monooxygenase 3 (531 aa).

FAD is bound by residues 9–13, Glu32, 40–41, and 61–62; these read GAGVS, LW, and NS. NADP(+)-binding positions include 60-61 and 195-198; these read TN and SGCD. Phosphoserine is present on Ser401. The helical transmembrane segment at 511–531 threads the bilayer; the sequence is YSHFLRLLAVPVLIALFLVLI.

This sequence belongs to the FMO family. It depends on FAD as a cofactor. Detected in liver and kidney (at protein level). Expressed in kidney and liver. Weakly expressed in lung. Does not seem to be expressed in brain, adipose tissue, or muscle.

The protein resides in the microsome membrane. Its subcellular location is the endoplasmic reticulum membrane. The enzyme catalyses trimethylamine + NADPH + O2 = trimethylamine N-oxide + NADP(+) + H2O. It carries out the reaction N,N-dimethylaniline + NADPH + O2 + H(+) = N,N-dimethylaniline N-oxide + NADP(+) + H2O. The catalysed reaction is hypotaurine + NADPH + O2 + H(+) = taurine + NADP(+) + H2O. It catalyses the reaction (S)-nicotine + NADPH + O2 = trans-(S)-nicotine N(1')-oxide + NADP(+) + H2O. The enzyme catalyses albendazole + NADPH + O2 + H(+) = albendazole S-oxide + NADP(+) + H2O. Essential hepatic enzyme that catalyzes the oxygenation of a wide variety of nitrogen- and sulfur-containing compounds including drugs as well as dietary compounds. Plays an important role in the metabolism of trimethylamine (TMA), via the production of trimethylamine N-oxide (TMAO) metabolite. TMA is generated by the action of gut microbiota using dietary precursors such as choline, choline containing compounds, betaine or L-carnitine. By regulating TMAO concentration, FMO3 directly impacts both platelet responsiveness and rate of thrombus formation. The sequence is that of Flavin-containing monooxygenase 3 (Fmo3) from Rattus norvegicus (Rat).